Here is an 878-residue protein sequence, read N- to C-terminus: Alanine--tRNA ligase (878 aa).

Residues H566, H570, C668, and H672 each coordinate Zn(2+).

This sequence belongs to the class-II aminoacyl-tRNA synthetase family. Requires Zn(2+) as cofactor.

The protein resides in the cytoplasm. The catalysed reaction is tRNA(Ala) + L-alanine + ATP = L-alanyl-tRNA(Ala) + AMP + diphosphate. Functionally, catalyzes the attachment of alanine to tRNA(Ala) in a two-step reaction: alanine is first activated by ATP to form Ala-AMP and then transferred to the acceptor end of tRNA(Ala). Also edits incorrectly charged Ser-tRNA(Ala) and Gly-tRNA(Ala) via its editing domain. This Bacillus velezensis (strain DSM 23117 / BGSC 10A6 / LMG 26770 / FZB42) (Bacillus amyloliquefaciens subsp. plantarum) protein is Alanine--tRNA ligase.